The sequence spans 216 residues: Serine/threonine-protein phosphatase 1 (216 aa).

Positions 24, 26, 53, and 79 each coordinate Mn(2+). The active-site Proton donor is the His-80. A Mn(2+)-binding site is contributed by His-185.

Belongs to the PPP phosphatase family. PP-1 subfamily. Mn(2+) serves as cofactor.

It catalyses the reaction O-phospho-L-seryl-[protein] + H2O = L-seryl-[protein] + phosphate. It carries out the reaction O-phospho-L-threonyl-[protein] + H2O = L-threonyl-[protein] + phosphate. Inhibited by cadmium, copper, zinc when added cobalt when added concomitantly with manganese. Functionally, can hydrolyze phosphorylated Ser-, Thr- or Tyr-substrates in vitro. The natural substrate is unknown. This chain is Serine/threonine-protein phosphatase 1 (pphA), found in Salmonella typhimurium (strain LT2 / SGSC1412 / ATCC 700720).